Consider the following 93-residue polypeptide: RNA-binding protein Hfq (93 aa).

The 61-residue stretch at 11–71 folds into the Sm domain; the sequence is DVFLNHVRKS…ISTVMPGAPI (61 aa).

Belongs to the Hfq family. Homohexamer.

In terms of biological role, RNA chaperone that binds small regulatory RNA (sRNAs) and mRNAs to facilitate mRNA translational regulation in response to envelope stress, environmental stress and changes in metabolite concentrations. Also binds with high specificity to tRNAs. This Granulibacter bethesdensis (strain ATCC BAA-1260 / CGDNIH1) protein is RNA-binding protein Hfq.